The following is a 1004-amino-acid chain: Sal-like protein 2 (1004 aa).

Disordered stretches follow at residues 1–33, 51–122, 137–177, 220–270, and 285–307; these read MSRRKQRRPQQLISDCEGPSASENGDASEEDHP, AHQN…EESS, GGGL…SGHL, PASP…EPPK, and PFSVGGVGRSHKPTPAPSPALPG. The segment at 34 to 56 adopts a C2H2-type 1; atypical zinc-finger fold; sequence QVCAKCCAQFSDPTEFLAHQNSC. Low complexity predominate over residues 71–81; sequence NPSNSSASSAP. A compositionally biased stretch (basic and acidic residues) spans 83-98; sequence PEGHSRSQVMDTEHSN. The segment covering 99–110 has biased composition (low complexity); sequence PPDSGSSGAPDP. The span at 151-171 shows a compositional bias: pro residues; sequence PLPPESTPAPPPPPPPPPPPG. At serine 243 the chain carries Phosphoserine. 5 consecutive C2H2-type zinc fingers follow at residues 372-394, 400-422, 629-651, 657-679, and 689-711; these read HKCRFCAKVFGSDSALQIHLRSH, YKCNVCGNRFTTRGNLKVHFHRH, NQCVICLRVLSCPRALRLHYGQH, FKCKVCGRAFSTRGNLRAHFVGH, and NSCPICQKKFTNAVTLQQHVRMH. The interval 712–910 is disordered; it reads LGGQIPNGGS…PGESSGRKAC (199 aa). The segment covering 731-742 has biased composition (polar residues); the sequence is QENSSEQSTASG. Residues 756–779 show a composition bias toward acidic residues; it reads PEEEMSEEEEEDEEEEEDVTDEDS. 3 positions are modified to phosphoserine: serine 794, serine 799, and serine 803. The span at 800-809 shows a compositional bias: acidic residues; sequence EEVSGAEEEV. The span at 810–819 shows a compositional bias: low complexity; sequence ATSVAAPTTV. The span at 820–829 shows a compositional bias: basic and acidic residues; sequence KEMDSNEKAP. Residues 832-841 show a composition bias toward pro residues; the sequence is TLPPPPPPPD. Residues 896–910 show a composition bias toward basic and acidic residues; the sequence is AMKKDPGESSGRKAC. Lysine 908 participates in a covalent cross-link: Glycyl lysine isopeptide (Lys-Gly) (interchain with G-Cter in ubiquitin). C2H2-type zinc fingers lie at residues 908-930 and 937-961; these read KACEVCGQSFPTQTALEEHQKTH and FTCVFCRQGFLDRATLKKHMLLAHH.

It belongs to the sal C2H2-type zinc-finger protein family. Expressed throughout embryonic development. In adult predominantly in brain.

The protein localises to the nucleus. In terms of biological role, probable transcription factor that plays a role in eye development before, during, and after optic fissure closure. The polypeptide is Sal-like protein 2 (Sall2) (Mus musculus (Mouse)).